The following is a 422-amino-acid chain: Gamma-glutamyl phosphate reductase (422 aa).

Belongs to the gamma-glutamyl phosphate reductase family.

Its subcellular location is the cytoplasm. It catalyses the reaction L-glutamate 5-semialdehyde + phosphate + NADP(+) = L-glutamyl 5-phosphate + NADPH + H(+). It participates in amino-acid biosynthesis; L-proline biosynthesis; L-glutamate 5-semialdehyde from L-glutamate: step 2/2. Catalyzes the NADPH-dependent reduction of L-glutamate 5-phosphate into L-glutamate 5-semialdehyde and phosphate. The product spontaneously undergoes cyclization to form 1-pyrroline-5-carboxylate. The sequence is that of Gamma-glutamyl phosphate reductase from Chloroflexus aurantiacus (strain ATCC 29366 / DSM 635 / J-10-fl).